A 287-amino-acid chain; its full sequence is Cysteine-rich repeat secretory protein 58 (287 aa).

An N-terminal signal peptide occupies residues 1–20 (METTKKLFALLCLFVTMNQA). The Extracellular segment spans residues 21–267 (ISVSDPDDME…GSFSHRGNNK (247 aa)). 2 consecutive Gnk2-homologous domains span residues 28–130 (DMET…DKFF) and 135–246 (ETNP…TYNS). 9 N-linked (GlcNAc...) asparagine glycosylation sites follow: Asn39, Asn43, Asn59, Asn68, Asn89, Asn99, Asn107, Asn208, and Asn245. Residues 268-286 (LLGGMVLAVSVSVFAFLSL) form a helical membrane-spanning segment. Position 287 (Val287) is a topological domain, cytoplasmic.

This sequence belongs to the cysteine-rich repeat secretory protein family.

The protein localises to the membrane. This Arabidopsis thaliana (Mouse-ear cress) protein is Cysteine-rich repeat secretory protein 58 (CRRSP58).